The following is a 460-amino-acid chain: Spermatogenesis-defective protein 39 homolog (460 aa).

Phosphothreonine is present on Thr-21. Residues 70–101 (SIKETAGSSGSTSEGREQMKGRNSFYTQLPKP) form a disordered region. Low complexity predominate over residues 73 to 82 (ETAGSSGSTS). At Thr-115 the chain carries Phosphothreonine. Phosphoserine is present on residues Ser-119, Ser-122, and Ser-128. Positions 121 to 133 (QSLSDALSDTPAK) are enriched in polar residues. The segment at 121–141 (QSLSDALSDTPAKTYSPELGR) is disordered. Phosphothreonine is present on Thr-130.

Belongs to the SPE39 family. Interacts with VPS33B. Associates with the homotypic fusion and vacuole protein sorting (HOPS) complex; impaired by VPS33B. Interacts with RAB11A.

The protein resides in the cytoplasm. Its subcellular location is the cytoplasmic vesicle. The protein localises to the early endosome. It localises to the recycling endosome. It is found in the late endosome. Functionally, proposed to be involved in endosomal maturation implicating in part VPS33B. In epithelial cells, the VPS33B:VIPAS39 complex may play a role in the apical RAB11A-dependent recycling pathway and in the maintenance of the apical-basolateral polarity. May play a role in lysosomal trafficking, probably via association with the core HOPS complex in a discrete population of endosomes; the functions seems to be independent of VPS33B. May play a role in vesicular trafficking during spermatogenesis. May be involved in direct or indirect transcriptional regulation of E-cadherin. This Rattus norvegicus (Rat) protein is Spermatogenesis-defective protein 39 homolog (Vipas39).